Consider the following 323-residue polypeptide: Probable proline iminopeptidase (323 aa).

Positions 37 to 301 (VVLHGGPGSR…VIVDEAGHDA (265 aa)) constitute an AB hydrolase-1 domain. S114 functions as the Nucleophile in the catalytic mechanism. D271 is a catalytic residue. H299 acts as the Proton donor in catalysis.

The protein belongs to the peptidase S33 family.

The protein localises to the cytoplasm. It carries out the reaction Release of N-terminal proline from a peptide.. In terms of biological role, specifically catalyzes the removal of N-terminal proline residues from peptides. This is Probable proline iminopeptidase from Streptomyces coelicolor (strain ATCC BAA-471 / A3(2) / M145).